A 117-amino-acid chain; its full sequence is uncharacterized protein (117 aa).

Positions 1–24 (MMTEFGSAMTLVTGLVAYGAYVKS) are cleaved as a signal peptide. The interval 42–117 (EKENFNYNNN…NNQIKRRLFD (76 aa)) is disordered. Residues 46–95 (FNYNNNNNNNNNNNNNNSNNNDNNNNNNSNSNNNNNNNNNNNNNNNNNIN) show a composition bias toward low complexity. N-linked (GlcNAc...) asparagine glycosylation is found at N61 and N72. Positions 96–110 (DKQINGTNIFDSNNQ) are enriched in polar residues.

The protein localises to the secreted. This is an uncharacterized protein from Dictyostelium discoideum (Social amoeba).